Reading from the N-terminus, the 681-residue chain is PWWP domain-containing DNA repair factor 3B (681 aa).

Positions 102–121 (NLSQESMSEEQPTATASENV) are enriched in polar residues. Disordered stretches follow at residues 102–144 (NLSQ…TQED), 166–200 (HTTGESMPSEMDTKATENLGCCQTDPSLADEDDKK), and 285–304 (QNQSSVESDVGAETSTAGCS). Ser128 is modified (phosphoserine). The segment covering 285 to 302 (QNQSSVESDVGAETSTAG) has biased composition (polar residues). The region spanning 377-438 (TGMIVWFKYQ…KKYDCKEKQA (62 aa)) is the PWWP domain.

This sequence belongs to the PWWP3A family.

This chain is PWWP domain-containing DNA repair factor 3B (Pwwp3b), found in Mus musculus (Mouse).